The sequence spans 250 residues: Aquaporin SIP2-1 (250 aa).

A run of 2 helical transmembrane segments spans residues 14–34 (PWLVVGDLVVAAMWVCAGALV) and 55–75 (VALSLVYMFFFAWLEGFTGGA). The NPA 1 motif lies at 78–80 (NPL). 4 consecutive transmembrane segments (helical) span residues 95 to 115 (LYLFAAFVRMPAQVFGSILGV), 132 to 152 (SVGVHHGALAEGLATFMVVIV), 178 to 200 (FHLLSSDITGGVMNPASAFAWAY), and 211 to 231 (LLVYWLAPLQATLLGVWVVTL). Positions 191 to 193 (NPA) match the NPA 2 motif.

It belongs to the MIP/aquaporin (TC 1.A.8) family. SIP (TC 1.A.8.10) subfamily. Expressed in leaves and anthers, and at lower levels in roots.

Its subcellular location is the membrane. Aquaporins facilitate the transport of water and small neutral solutes across cell membranes. In Oryza sativa subsp. japonica (Rice), this protein is Aquaporin SIP2-1 (SIP2-1).